The chain runs to 475 residues: Rho GTPase-activating protein 15 (475 aa).

A compositionally biased stretch (polar residues) spans 1–22 (MQKSTNSDTSVETLNSTRQGTG). Residues 1 to 23 (MQKSTNSDTSVETLNSTRQGTGA) form a disordered region. A phosphoserine mark is found at S43, S103, S196, S199, and S243. The PH domain occupies 79-189 (MVEKEGYLQK…WFHAIKNAID (111 aa)). Residues 281 to 470 (SHLHKVCERE…LMLSEYSKIF (190 aa)) enclose the Rho-GAP domain.

Expressed in lung, liver and lymphoid cells.

The protein resides in the cytoplasm. Its subcellular location is the membrane. GTPase activator for the Rho-type GTPases by converting them to an inactive GDP-bound state. Has activity toward RAC1. Overexpression results in an increase in actin stress fibers and cell contraction. This chain is Rho GTPase-activating protein 15 (ARHGAP15), found in Homo sapiens (Human).